The primary structure comprises 638 residues: MPVKKYLLKCLHRLQKGPGYTYKELLVWYCNNTNTHGPKRIICEGPKKKAMWFLLTLLFACLVCWQWGVFIQTYLSWEVSVSLSMGFKTMNFPAVTVCNSSPFQYSKVKHLLKDLYKLMEAVLDKILAPKSSHTNTTSTLNFTIWNHTPLVLIDERNPDHPVVLNLFGDSHNSSNPAPGSTCNAQGCKVAMRLCSANGTVCTFRNFTSATQAVTEWYILQATNIFSQVLPQDLVGMGYAPDRIILACLFGTEPCSHRNFTPIFYPDYGNCYIFNWGMTEKALPSANPGTEFGLKLILDIGQEDYVPFLASTAGARLMLHEQRTYPFIREEGIYAMAGTETSIGVLLDKLQGKGEPYSPCTMNGSDVAIQNLYSDYNTTYSIQACLHSCFQDHMIHNCSCGHYLYPLPAGEKYCNNRDFPDWAYCYLSLQMSVVQRETCLSMCKESCNDTQYKMTISMADWPSEASEDWILHVLSQERDQSSNITLSRKGIVKLNIYFQEFNYRTIEESPANNIVWLLSNLGGQFGFWMGGSVLCLIEFGEIIIDFIWITVIKLVASCKGLRRRRPQAPYTGPPPTVAELVEAHTNFGFQPDTTSCRPNAEVYPDQQTLPIPGTPPPNYDSLRLQPLDTMESDSEVEAI.

The Cytoplasmic segment spans residues 1 to 50 (MPVKKYLLKCLHRLQKGPGYTYKELLVWYCNNTNTHGPKRIICEGPKKKA). A helical transmembrane segment spans residues 51–71 (MWFLLTLLFACLVCWQWGVFI). Over 72-530 (QTYLSWEVSV…GGQFGFWMGG (459 aa)) the chain is Extracellular. Disulfide bonds link Cys-98-Cys-270, Cys-182-Cys-187, Cys-194-Cys-201, Cys-247-Cys-254, Cys-359-Cys-446, Cys-384-Cys-442, Cys-388-Cys-438, Cys-397-Cys-424, and Cys-399-Cys-413. Residues Asn-135 and Asn-141 are each glycosylated (N-linked (GlcNAc...) asparagine). The chain crosses the membrane as a helical span at residues 531 to 551 (SVLCLIEFGEIIIDFIWITVI). At 552–638 (KLVASCKGLR…MESDSEVEAI (87 aa)) the chain is on the cytoplasmic side. A disordered region spans residues 598–620 (NAEVYPDQQTLPIPGTPPPNYDS). Residues 614-618 (PPPNY) carry the PY motif; recruits WW domain-containing proteins and is thereby required for ubiquitination and inhibition of the channel by NEDD4 and NEDD4L motif. Ser-631 and Ser-633 each carry phosphoserine.

The protein belongs to the amiloride-sensitive sodium channel (TC 1.A.6) family. SCNN1B subfamily. In terms of assembly, component of the heterotrimeric epithelial sodium channel (ENaC) composed of an alpha/SCNN1A, a beta/SCNN1B and a gamma/SCNN1G subunit. Interacts with WWP1 (via WW domains). Interacts with WWP2 (via WW domains). Interacts with the full-length immature form of PCSK9 (pro-PCSK9). Interacts (N-glycosylated) with BPIFA1; the interaction is direct and inhibits the proteolytic processing of SCNN1A and SCNN1G and the activation of ENaC. In terms of processing, ubiquitinated. Can be ubiquitinated at multiple sites and undergo monoubiquitination and polyubiquitination. Ubiquitination by NEDD4 or NEDD4L inhibits the ENaC channel through endocytosis, intracellular retention and degradation of its individual subunits. However, some studies could not confirm the ubiquitination of this subunit of the ENaC. Post-translationally, N-glycosylated. N-glycosylation is required for interaction with BPIFA1. Phosphorylated on serine and threonine residues. Aldosterone and insulin increase the basal level of phosphorylation. Expressed in lung and epididymis. In the caput region of the epididymis, expressed at the luminal and basolateral surfaces of the ducts and in the smooth muscle coat. In the caudal region of the epididymis, expressed along the luminal border but not continuously, in the smooth muscle coat, in the interstitial muscle tissue and in sperm in the caudal lumen.

Its subcellular location is the apical cell membrane. It localises to the cytoplasmic vesicle membrane. The enzyme catalyses Na(+)(in) = Na(+)(out). Originally identified and characterized by its inhibition by the diuretic drug amiloride. Functionally, this is one of the three pore-forming subunits of the heterotrimeric epithelial sodium channel (ENaC), a critical regulator of sodium balance and fluid homeostasis. ENaC operates in epithelial tissues, where it mediates the electrodiffusion of sodium ions from extracellular fluid through the apical membrane of cells, with water following osmotically. It plays a key role in maintaining sodium homeostasis through electrogenic sodium reabsorption in the kidneys. This subunit is not essential for ENaC function in airway surface liquid homeostasis and proper mucus clearance. The polypeptide is Epithelial sodium channel subunit beta (Rattus norvegicus (Rat)).